The chain runs to 160 residues: Large ribosomal subunit protein uL22c (160 aa).

The protein belongs to the universal ribosomal protein uL22 family. As to quaternary structure, part of the 50S ribosomal subunit.

The protein resides in the plastid. Its subcellular location is the chloroplast. This protein binds specifically to 23S rRNA. In terms of biological role, the globular domain of the protein is located near the polypeptide exit tunnel on the outside of the subunit, while an extended beta-hairpin is found that lines the wall of the exit tunnel in the center of the 70S ribosome. The polypeptide is Large ribosomal subunit protein uL22c (rpl22) (Nasturtium officinale (Watercress)).